A 296-amino-acid polypeptide reads, in one-letter code: Myozenin-1 (296 aa).

Ser82 carries the post-translational modification Phosphoserine. Gly residues-rich tracts occupy residues 105 to 117 and 134 to 170; these read FSYG…GQAG and SGFG…QAGG. A disordered region spans residues 105-172; sequence FSYGKGSSGG…GSGDQAGGDG (68 aa).

This sequence belongs to the myozenin family. As to quaternary structure, interacts with ACTN2, ACTN3, FLNA, FLNB, FLNC, LDB3, PPP3CA and TCAP. Interacts via its C-terminal region with MYOT. Expressed primarily in skeletal muscle and specifically enriched in the gastrocnemius, which is composed predominantly of fast-twitch muscle fibers. Detected at lower levels in heart.

The protein resides in the nucleus. Its subcellular location is the cell projection. It localises to the pseudopodium. Functionally, myozenins may serve as intracellular binding proteins involved in linking Z-disk proteins such as alpha-actinin, gamma-filamin, TCAP/telethonin, LDB3/ZASP and localizing calcineurin signaling to the sarcomere. Plays an important role in the modulation of calcineurin signaling. May play a role in myofibrillogenesis. The polypeptide is Myozenin-1 (Mus musculus (Mouse)).